A 380-amino-acid polypeptide reads, in one-letter code: Chorismate synthase (380 aa).

Arg-49 contacts NADP(+). Residues Gly-288, 303–307 (KPPSS), and Arg-330 contribute to the FMN site.

It belongs to the chorismate synthase family. It depends on FMNH2 as a cofactor.

It carries out the reaction 5-O-(1-carboxyvinyl)-3-phosphoshikimate = chorismate + phosphate. It participates in metabolic intermediate biosynthesis; chorismate biosynthesis; chorismate from D-erythrose 4-phosphate and phosphoenolpyruvate: step 7/7. Functionally, catalyzes the anti-1,4-elimination of the C-3 phosphate and the C-6 proR hydrogen from 5-enolpyruvylshikimate-3-phosphate (EPSP) to yield chorismate, which is the branch point compound that serves as the starting substrate for the three terminal pathways of aromatic amino acid biosynthesis. This reaction introduces a second double bond into the aromatic ring system. This chain is Chorismate synthase, found in Aeropyrum pernix (strain ATCC 700893 / DSM 11879 / JCM 9820 / NBRC 100138 / K1).